A 1314-amino-acid chain; its full sequence is Enfumafungin synthase efuA (1314 aa).

The segment at 1–680 (MPSYHNTDKT…RYIDKASRQG (680 aa)) is terpenne cyclase. PFTB repeat units lie at residues 19 to 62 (LQQA…ELSL) and 66 to 107 (GPEI…RILG). The next 3 membrane-spanning stretches (helical) occupy residues 133-153 (FFTRFFLATFGLVPWTAIPQM), 155-175 (AELILLPTFMFLNIYVLSSWA), and 230-250 (YQWIEFAFTLLDHILALFGGL). The PFTB 3 repeat unit spans residues 260 to 300 (LKRCTAWLLEHQEESGDWAGFFPPIHGSIWALLLDGFSFQS). The active-site Proton donor is the D395. PFTB repeat units lie at residues 417–458 (VMNG…DSLV) and 546–597 (CMRT…LRFR). Positions 681 to 1314 (IETLRIPSSS…ADSVLDIEEK (634 aa)) are glycosyltransferase. A helical membrane pass occupies residues 1200–1220 (AIVQLLYGFTTTILALFGWLK). The segment at 1289–1314 (DSGASESSRSSLDGGHADSVLDIEEK) is disordered. Residues 1292-1302 (ASESSRSSLDG) show a composition bias toward low complexity.

The protein in the N-terminal section; belongs to the terpene cyclase/mutase family. In the C-terminal section; belongs to the glycosyltransferase 28 family.

The protein resides in the membrane. It participates in secondary metabolite biosynthesis; terpenoid biosynthesis. Its function is as follows. Terpene cyclase-glycosyl transferase fusion protein; part of the gene cluster that mediates the biosynthesis of enfumafungin, a glycosylated fernene-type triterpenoid with potent antifungal activity, mediated by its interaction with beta-1,3-glucan synthase and the fungal cell wall. The pathway begins with the terpene cyclase-glycosyl transferase fusion protein that most likely uses 2,3-oxidosqualene as substrate and catalyzes glycosylation immediately after cyclization. The fernene glycoside then could be processed by the desaturase efuI which catalyzes isomerization of a double bond established by efuA to form the core structure. The latter would then undergo a series of hydroxylations in unknown order at C-2, C-19, C-23 and C-25, which would be catalyzed by two of the three cytochrome P450 monooxygenases efuB, efuG or efuH. The hydroxy-group at C-25 becomes oxidized by the dehydrogenase efuE to enable a spontaneous, non-enzymatic hemiacetal formation with C-23. After hydroxylation at C-2, acetylation by the acetyltransferase efuC takes place. The final steps in enfumafungin biosynthesis require expansion of the 5-membered ring by lactonization via a Baeyer-Villiger reaction mediated by one of the BGC's cytochrome P450 monooxygenases (efuB, efuG or efuH) followed by ring cleavage. This type of reaction would establish a double bond between C-20 and C-21 which could be reduced by the reductase efuL to form the final product. The sequence is that of Enfumafungin synthase efuA from Hormonema carpetanum.